A 1061-amino-acid chain; its full sequence is RecBCD enzyme subunit RecC (1061 aa).

This sequence belongs to the RecC family. In terms of assembly, heterotrimer of RecB, RecC and RecD. All subunits contribute to DNA-binding.

Its function is as follows. A helicase/nuclease that prepares dsDNA breaks (DSB) for recombinational DNA repair. Binds to DSBs and unwinds DNA via a highly rapid and processive ATP-dependent bidirectional helicase activity. Unwinds dsDNA until it encounters a Chi (crossover hotspot instigator) sequence from the 3' direction. Cuts ssDNA a few nucleotides 3' to the Chi site. The properties and activities of the enzyme are changed at Chi. The Chi-altered holoenzyme produces a long 3'-ssDNA overhang and facilitates RecA-binding to the ssDNA for homologous DNA recombination and repair. Holoenzyme degrades any linearized DNA that is unable to undergo homologous recombination. In the holoenzyme this subunit recognizes the wild-type Chi sequence, and when added to isolated RecB increases its ATP-dependent helicase processivity. This chain is RecBCD enzyme subunit RecC, found in Buchnera aphidicola subsp. Schizaphis graminum (strain Sg).